Consider the following 513-residue polypeptide: 2-isopropylmalate synthase (513 aa).

Residues L5–V268 form the Pyruvate carboxyltransferase domain. Residues D14, H202, H204, and N239 each coordinate Mn(2+). The tract at residues R394–G513 is regulatory domain.

Belongs to the alpha-IPM synthase/homocitrate synthase family. LeuA type 1 subfamily. Homodimer. The cofactor is Mn(2+).

Its subcellular location is the cytoplasm. It carries out the reaction 3-methyl-2-oxobutanoate + acetyl-CoA + H2O = (2S)-2-isopropylmalate + CoA + H(+). It participates in amino-acid biosynthesis; L-leucine biosynthesis; L-leucine from 3-methyl-2-oxobutanoate: step 1/4. Catalyzes the condensation of the acetyl group of acetyl-CoA with 3-methyl-2-oxobutanoate (2-ketoisovalerate) to form 3-carboxy-3-hydroxy-4-methylpentanoate (2-isopropylmalate). This Leptothrix cholodnii (strain ATCC 51168 / LMG 8142 / SP-6) (Leptothrix discophora (strain SP-6)) protein is 2-isopropylmalate synthase.